Consider the following 202-residue polypeptide: Holliday junction branch migration complex subunit RuvA (202 aa).

Residues 1-64 form a domain I region; sequence MIDYVSGTLV…EDDESLYGFA (64 aa). The segment at 65–143 is domain II; sequence TKAERTVFET…DLDVLEDTSP (79 aa). Positions 144-149 are flexible linker; it reads LSGGSD. Positions 150-202 are domain III; the sequence is ARAEARADALEALTELGLSKADAERSIRQVLRDNAGIQSADELVRRALKADQE.

The protein belongs to the RuvA family. In terms of assembly, homotetramer. Forms an RuvA(8)-RuvB(12)-Holliday junction (HJ) complex. HJ DNA is sandwiched between 2 RuvA tetramers; dsDNA enters through RuvA and exits via RuvB. An RuvB hexamer assembles on each DNA strand where it exits the tetramer. Each RuvB hexamer is contacted by two RuvA subunits (via domain III) on 2 adjacent RuvB subunits; this complex drives branch migration. In the full resolvosome a probable DNA-RuvA(4)-RuvB(12)-RuvC(2) complex forms which resolves the HJ.

It localises to the cytoplasm. Its function is as follows. The RuvA-RuvB-RuvC complex processes Holliday junction (HJ) DNA during genetic recombination and DNA repair, while the RuvA-RuvB complex plays an important role in the rescue of blocked DNA replication forks via replication fork reversal (RFR). RuvA specifically binds to HJ cruciform DNA, conferring on it an open structure. The RuvB hexamer acts as an ATP-dependent pump, pulling dsDNA into and through the RuvAB complex. HJ branch migration allows RuvC to scan DNA until it finds its consensus sequence, where it cleaves and resolves the cruciform DNA. This is Holliday junction branch migration complex subunit RuvA from Salinibacter ruber (strain DSM 13855 / M31).